A 430-amino-acid chain; its full sequence is Glutamate-1-semialdehyde 2,1-aminomutase (430 aa).

Position 267 is an N6-(pyridoxal phosphate)lysine (Lys-267).

Belongs to the class-III pyridoxal-phosphate-dependent aminotransferase family. HemL subfamily. In terms of assembly, homodimer. It depends on pyridoxal 5'-phosphate as a cofactor.

Its subcellular location is the cytoplasm. The enzyme catalyses (S)-4-amino-5-oxopentanoate = 5-aminolevulinate. It functions in the pathway porphyrin-containing compound metabolism; protoporphyrin-IX biosynthesis; 5-aminolevulinate from L-glutamyl-tRNA(Glu): step 2/2. The protein is Glutamate-1-semialdehyde 2,1-aminomutase of Thermomicrobium roseum (strain ATCC 27502 / DSM 5159 / P-2).